The sequence spans 484 residues: MNLGIILPLIIYLTFVFGAAIFAYVKRTKGDFLTEYYVGNRSMTGFVLAMTTASTYASASSFVGGPGAAYKYGLGWVLLAMIQVPVVWLALGALGKKFALLSRETNALTINDLFFYRYKNKYLVWLSSLALLLAFFAAMTVQFIGGARLLETTIGISYTQALLLFALTVGIYTFIGGFRAVVLTDTIQGTVMIFGTIILLIGTIYALGGVESAVNKLTEIDPDLVTPYGPNGMLDFQFMASFWILVCFGVVGLPHTAVRCMAFKDSKALHRGMLIGTIVLSIIMLGMHLAGALGRAVIPNLTVSDQVIPTLMIKVLPPIVAGIFLAAPMSAIMSTIDAQLIQSSSIFVKDLYLSAKPEAAKNEKKVSYFSSIITLILTALLIFAALNPPDMIIWLNLFAFGGLEAAFLWVIVLGIYWDKANAYGALSSMIIGLGSYILLTQLGIKLFNFHQIVPSLVFGLIAFLVGNKLGERRIEKTQLKVTAL.

Helical transmembrane passes span 3–23 (LGII…AIFA), 45–65 (GFVL…FVGG), 74–94 (LGWV…LGAL), 124–144 (VWLS…VQFI), 162–182 (LLLF…RAVV), 190–210 (TVMI…LGGV), 238–258 (FMAS…HTAV), 273–293 (MLIG…AGAL), 307–327 (VIPT…FLAA), 366–386 (VSYF…FAAL), 397–417 (LFAF…GIYW), 424–444 (GALS…QLGI), and 446–466 (LFNF…FLVG).

This sequence belongs to the sodium:solute symporter (SSF) (TC 2.A.21) family.

Its subcellular location is the cell inner membrane. The enzyme catalyses (R)-pantothenate(in) + Na(+)(in) = (R)-pantothenate(out) + Na(+)(out). In terms of biological role, catalyzes the sodium-dependent uptake of extracellular pantothenate. The sequence is that of Sodium/pantothenate symporter (panF) from Haemophilus influenzae (strain ATCC 51907 / DSM 11121 / KW20 / Rd).